The primary structure comprises 672 residues: Hydrogenase-4 component B (672 aa).

Residues 1-5 (MDALQ) lie on the Periplasmic side of the membrane. A helical transmembrane segment spans residues 6–26 (LLTWSLILYLFASLASLFLLG). At 27–30 (LDRL) the chain is on the cytoplasmic side. A helical membrane pass occupies residues 31–51 (AIKLSGITSLVGGVIGIISGI). Over 52 to 79 (TQLHAGVTLVARFAPPFEFADLTLRMDS) the chain is Periplasmic. A helical transmembrane segment spans residues 80 to 100 (LSAFMVLVISLLVVVCSLYSL). Residues 101-119 (TYMREYEGKGAAAMGFFMN) are Cytoplasmic-facing. A helical membrane pass occupies residues 120–140 (IFIASMVALLVMDNAFWFIVL). Topologically, residues 141 to 164 (FEMMSLSSWFLVIARQDKTSINAG) are periplasmic. The helical transmembrane segment at 165-185 (MLYFFIAHAGSVLIMIAFLLM) threads the bilayer. Residues 186 to 199 (GRESGSLDFASFRT) lie on the Cytoplasmic side of the membrane. Residues 200–220 (LSLSPGLASAVFLLAFFGFGA) form a helical membrane-spanning segment. Residues 221 to 242 (KAGMMPLHSWLPRAHPAAPSHA) are Periplasmic-facing. The helical transmembrane segment at 243 to 263 (SALMSGVMVKIGIFGILKVAM) threads the bilayer. Topologically, residues 264 to 272 (DLLAQTGLP) are cytoplasmic. The chain crosses the membrane as a helical span at residues 273-293 (LWWGILVMAIGAISALLGVLY). Over 294–311 (ALAEQDIKRLLAWSTVEN) the chain is Periplasmic. A helical membrane pass occupies residues 312 to 332 (VGIILLAVGVAMVGLSLHDPL). Residues 333–342 (LTVVGLLGAL) are Cytoplasmic-facing. Residues 343–363 (FHLLNHALFKGLLFLGAGAII) traverse the membrane as a helical segment. Over 364–384 (SRLHTHDMEKMGALAKRMPWT) the chain is Periplasmic. The chain crosses the membrane as a helical span at residues 385–405 (AAACLIGCLAISAIPPLNGFI). Topologically, residues 406-427 (SEWYTWQSLFSLSRVEAVALQL) are cytoplasmic. A helical membrane pass occupies residues 428–448 (AGPIAMVMLAVTGGLAVMCFV). Residues 449-474 (KMYGITFCGAPRSTHAEEAQEVPNTM) lie on the Periplasmic side of the membrane. The helical transmembrane segment at 475 to 495 (IVAMLLLAALCVLIALSASWL) threads the bilayer. Over 496 to 504 (APKIMHIAH) the chain is Cytoplasmic. Residues 505–525 (AFTNTPPATVASGIALVPGTF) traverse the membrane as a helical segment. Residues 526–531 (HTQVTP) are Periplasmic-facing. Residues 532 to 552 (SLLLLLLLAMPLLPGLYWLWC) traverse the membrane as a helical segment. The Cytoplasmic portion of the chain corresponds to 553–651 (RSRRAAFRRT…KEIQHLQSGD (99 aa)). The chain crosses the membrane as a helical span at residues 652–672 (FRLYCLYVVAALVVLLIAIAV).

The protein belongs to the complex I subunit 5 family.

The protein resides in the cell inner membrane. In terms of biological role, possible component of hydrogenase 4. This Escherichia coli (strain K12) protein is Hydrogenase-4 component B.